A 741-amino-acid chain; its full sequence is NAD(P)H-quinone oxidoreductase subunit 5, chloroplastic (741 aa).

Transmembrane regions (helical) follow at residues 9–29 (WIIP…LLLF), 40–60 (WAFQ…NLSI), 89–109 (IDPL…MVLI), 125–145 (FAYM…SNLI), 147–167 (IYIF…FWFT), 185–205 (GDFG…SFEF), 219–239 (NEVN…GAIA), 258–278 (TPIS…FLVA), 284–304 (FIVI…TVFF), 327–347 (LGYM…FHLI), 354–374 (ALLF…VGYC), 396–416 (NSFL…CFWS), 425–445 (WLYS…TAFY), 549–569 (LFPI…GIPF), 605–625 (VFSV…YKPV), and 721–741 (YLFF…FLNF).

This sequence belongs to the complex I subunit 5 family. As to quaternary structure, NDH is composed of at least 16 different subunits, 5 of which are encoded in the nucleus.

It is found in the plastid. The protein localises to the chloroplast thylakoid membrane. It carries out the reaction a plastoquinone + NADH + (n+1) H(+)(in) = a plastoquinol + NAD(+) + n H(+)(out). It catalyses the reaction a plastoquinone + NADPH + (n+1) H(+)(in) = a plastoquinol + NADP(+) + n H(+)(out). Functionally, NDH shuttles electrons from NAD(P)H:plastoquinone, via FMN and iron-sulfur (Fe-S) centers, to quinones in the photosynthetic chain and possibly in a chloroplast respiratory chain. The immediate electron acceptor for the enzyme in this species is believed to be plastoquinone. Couples the redox reaction to proton translocation, and thus conserves the redox energy in a proton gradient. The chain is NAD(P)H-quinone oxidoreductase subunit 5, chloroplastic (ndhF) from Flaveria ramosissima (Yellowtops).